The chain runs to 152 residues: Ribosome maturation factor RimP (152 aa).

This sequence belongs to the RimP family.

Its subcellular location is the cytoplasm. Required for maturation of 30S ribosomal subunits. This is Ribosome maturation factor RimP from Burkholderia orbicola (strain MC0-3).